A 304-amino-acid chain; its full sequence is Acetyl-coenzyme A carboxylase carboxyl transferase subunit beta (304 aa).

Residues 23 to 292 enclose the CoA carboxyltransferase N-terminal domain; that stretch reads VWTKCDSCGQ…PNPDAPREGV (270 aa). Zn(2+)-binding residues include Cys-27, Cys-30, Cys-46, and Cys-49. The C4-type zinc finger occupies 27-49; the sequence is CDSCGQVLYRAELERNLEVCPKC. Positions 284 to 304 are disordered; that stretch reads NPDAPREGVVVPPAPGQESEA.

It belongs to the AccD/PCCB family. As to quaternary structure, acetyl-CoA carboxylase is a heterohexamer composed of biotin carboxyl carrier protein (AccB), biotin carboxylase (AccC) and two subunits each of ACCase subunit alpha (AccA) and ACCase subunit beta (AccD). Zn(2+) is required as a cofactor.

It is found in the cytoplasm. The enzyme catalyses N(6)-carboxybiotinyl-L-lysyl-[protein] + acetyl-CoA = N(6)-biotinyl-L-lysyl-[protein] + malonyl-CoA. It participates in lipid metabolism; malonyl-CoA biosynthesis; malonyl-CoA from acetyl-CoA: step 1/1. Functionally, component of the acetyl coenzyme A carboxylase (ACC) complex. Biotin carboxylase (BC) catalyzes the carboxylation of biotin on its carrier protein (BCCP) and then the CO(2) group is transferred by the transcarboxylase to acetyl-CoA to form malonyl-CoA. The polypeptide is Acetyl-coenzyme A carboxylase carboxyl transferase subunit beta (Salmonella arizonae (strain ATCC BAA-731 / CDC346-86 / RSK2980)).